Reading from the N-terminus, the 754-residue chain is Polyadenylate-binding protein, cytoplasmic and nuclear (754 aa).

Over residues 1-25 (MSAEVSTTPAADNVNGTPEATNAAA) the composition is skewed to polar residues. The tract at residues 1–52 (MSAEVSTTPAADNVNGTPEATNAAATSAPEVTAVESSSPTSPNNNNQPHSAS) is disordered. Positions 36 to 46 (SSSPTSPNNNN) are enriched in low complexity. 4 consecutive RRM domains span residues 51–129 (ASLY…WSQR), 139–216 (GNVF…HHIS), 232–309 (TNIY…RAQK), and 335–465 (VNLY…LAQR). Disordered stretches follow at residues 365–420 (KVMR…KKSD) and 595–648 (RGGG…EEAP). Residues 366 to 420 (VMRDSTPAERTETPDSEKEKEVNKENEKKEDEEKAAEEKPKESDEEKKDETKKSD) show a composition bias toward basic and acidic residues. The span at 610 to 633 (GMRGPGYQGRGGPQGGPRPQGGRG) shows a compositional bias: gly residues. Residues 634 to 648 (QNAAAQPAAGREEAP) show a composition bias toward low complexity. The region spanning 649-726 (AGALTAQALN…ALSVYDEYMK (78 aa)) is the PABC domain. Positions 729–754 (GEGEAPADADKPKEAAKETATEENKS) are disordered.

This sequence belongs to the polyadenylate-binding protein type-1 family.

It localises to the cytoplasm. The protein localises to the nucleus. In terms of biological role, binds the poly(A) tail of mRNA. Appears to be an important mediator of the multiple roles of the poly(A) tail in mRNA biogenesis, stability and translation. In the nucleus, involved in both mRNA cleavage and polyadenylation. Is also required for efficient mRNA export to the cytoplasm. Acts in concert with a poly(A)-specific nuclease (PAN) to affect poly(A) tail shortening, which may occur concomitantly with either nucleocytoplasmic mRNA transport or translational initiation. In the cytoplasm, stimulates translation initiation and regulates mRNA decay through translation termination-coupled poly(A) shortening, probably mediated by PAN. The polypeptide is Polyadenylate-binding protein, cytoplasmic and nuclear (pab1) (Aspergillus clavatus (strain ATCC 1007 / CBS 513.65 / DSM 816 / NCTC 3887 / NRRL 1 / QM 1276 / 107)).